The sequence spans 311 residues: Acetyl-coenzyme A carboxylase carboxyl transferase subunit alpha (311 aa).

Positions 36–286 constitute a CoA carboxyltransferase C-terminal domain; that stretch reads KLEKEVEKTF…KEYFIKSLAE (251 aa).

Belongs to the AccA family. As to quaternary structure, acetyl-CoA carboxylase is a heterohexamer composed of biotin carboxyl carrier protein (AccB), biotin carboxylase (AccC) and two subunits each of ACCase subunit alpha (AccA) and ACCase subunit beta (AccD).

The protein localises to the cytoplasm. It carries out the reaction N(6)-carboxybiotinyl-L-lysyl-[protein] + acetyl-CoA = N(6)-biotinyl-L-lysyl-[protein] + malonyl-CoA. Its pathway is lipid metabolism; malonyl-CoA biosynthesis; malonyl-CoA from acetyl-CoA: step 1/1. In terms of biological role, component of the acetyl coenzyme A carboxylase (ACC) complex. First, biotin carboxylase catalyzes the carboxylation of biotin on its carrier protein (BCCP) and then the CO(2) group is transferred by the carboxyltransferase to acetyl-CoA to form malonyl-CoA. This is Acetyl-coenzyme A carboxylase carboxyl transferase subunit alpha from Aliarcobacter butzleri (strain RM4018) (Arcobacter butzleri).